The chain runs to 350 residues: UDP-3-O-acylglucosamine N-acyltransferase (350 aa).

Residue His251 is the Proton acceptor of the active site.

The protein belongs to the transferase hexapeptide repeat family. LpxD subfamily. In terms of assembly, homotrimer.

It catalyses the reaction a UDP-3-O-[(3R)-3-hydroxyacyl]-alpha-D-glucosamine + a (3R)-hydroxyacyl-[ACP] = a UDP-2-N,3-O-bis[(3R)-3-hydroxyacyl]-alpha-D-glucosamine + holo-[ACP] + H(+). It functions in the pathway bacterial outer membrane biogenesis; LPS lipid A biosynthesis. Its function is as follows. Catalyzes the N-acylation of UDP-3-O-acylglucosamine using 3-hydroxyacyl-ACP as the acyl donor. Is involved in the biosynthesis of lipid A, a phosphorylated glycolipid that anchors the lipopolysaccharide to the outer membrane of the cell. The polypeptide is UDP-3-O-acylglucosamine N-acyltransferase (Prochlorococcus marinus (strain NATL2A)).